A 359-amino-acid polypeptide reads, in one-letter code: Cytochrome c oxidase subunit 2 (359 aa).

The N-terminal stretch at 1–28 (MEQQNKRGLKRKALLGGVLGLGGLAMAG) is a signal peptide. Cys29 is lipidated: S-diacylglycerol cysteine. Transmembrane regions (helical) follow at residues 64–84 (VWVA…TAIF) and 107–127 (VPLE…LFFF). The interval 168–203 (PGGQDYQGSDPERQAAAEASKKDPSGDNPIHGNSKS) is disordered. Basic and acidic residues predominate over residues 177–192 (DPERQAAAEASKKDPS). Positions 244, 285, 287, 289, 293, and 296 each coordinate Cu cation. Residues 335 to 359 (YATSTSPFVSDRTATRDGENTQSNA) are disordered.

As to quaternary structure, associates with subunits I, III and IV to form cytochrome c oxidase. The 4 subunit cytochrome c oxidase forms a supercomplex with the menaquinol-cytochrome c reductase complex (cytochrome bc1). It depends on binuclear copper center (CuA) as a cofactor.

The protein resides in the cell membrane. The enzyme catalyses 4 Fe(II)-[cytochrome c] + O2 + 8 H(+)(in) = 4 Fe(III)-[cytochrome c] + 2 H2O + 4 H(+)(out). Subunits I and II form the functional core of the enzyme complex. Electrons originating in cytochrome c are transferred via heme a and Cu(A) to the binuclear center formed by heme a3 and Cu(B). The sequence is that of Cytochrome c oxidase subunit 2 (ctaC) from Corynebacterium glutamicum (strain ATCC 13032 / DSM 20300 / JCM 1318 / BCRC 11384 / CCUG 27702 / LMG 3730 / NBRC 12168 / NCIMB 10025 / NRRL B-2784 / 534).